The primary structure comprises 259 residues: 4-hydroxy-tetrahydrodipicolinate reductase (259 aa).

NAD(+)-binding positions include 8–13 (GFAGAM), 94–96 (GTT), and 120–123 (APNF). The Proton donor/acceptor role is filled by His-150. Residue His-151 participates in (S)-2,3,4,5-tetrahydrodipicolinate binding. Lys-154 functions as the Proton donor in the catalytic mechanism. 160 to 161 (GT) provides a ligand contact to (S)-2,3,4,5-tetrahydrodipicolinate.

Belongs to the DapB family.

Its subcellular location is the cytoplasm. It carries out the reaction (S)-2,3,4,5-tetrahydrodipicolinate + NAD(+) + H2O = (2S,4S)-4-hydroxy-2,3,4,5-tetrahydrodipicolinate + NADH + H(+). The catalysed reaction is (S)-2,3,4,5-tetrahydrodipicolinate + NADP(+) + H2O = (2S,4S)-4-hydroxy-2,3,4,5-tetrahydrodipicolinate + NADPH + H(+). Its pathway is amino-acid biosynthesis; L-lysine biosynthesis via DAP pathway; (S)-tetrahydrodipicolinate from L-aspartate: step 4/4. Catalyzes the conversion of 4-hydroxy-tetrahydrodipicolinate (HTPA) to tetrahydrodipicolinate. The polypeptide is 4-hydroxy-tetrahydrodipicolinate reductase (Limosilactobacillus fermentum (strain NBRC 3956 / LMG 18251) (Lactobacillus fermentum)).